The primary structure comprises 314 residues: Methionyl-tRNA formyltransferase (314 aa).

113–116 (SLLP) serves as a coordination point for (6S)-5,6,7,8-tetrahydrofolate.

The protein belongs to the Fmt family.

The enzyme catalyses L-methionyl-tRNA(fMet) + (6R)-10-formyltetrahydrofolate = N-formyl-L-methionyl-tRNA(fMet) + (6S)-5,6,7,8-tetrahydrofolate + H(+). In terms of biological role, attaches a formyl group to the free amino group of methionyl-tRNA(fMet). The formyl group appears to play a dual role in the initiator identity of N-formylmethionyl-tRNA by promoting its recognition by IF2 and preventing the misappropriation of this tRNA by the elongation apparatus. This is Methionyl-tRNA formyltransferase from Pseudomonas aeruginosa (strain UCBPP-PA14).